The sequence spans 349 residues: Anthranilate phosphoribosyltransferase (349 aa).

5-phospho-alpha-D-ribose 1-diphosphate-binding positions include G87, G90 to D91, T95, N97 to T100, K115 to S123, and S127. G87 provides a ligand contact to anthranilate. S99 contributes to the Mg(2+) binding site. Anthranilate is bound at residue N118. An anthranilate-binding site is contributed by R173. Residues D231 and E232 each contribute to the Mg(2+) site.

It belongs to the anthranilate phosphoribosyltransferase family. Homodimer. Mg(2+) serves as cofactor.

It catalyses the reaction N-(5-phospho-beta-D-ribosyl)anthranilate + diphosphate = 5-phospho-alpha-D-ribose 1-diphosphate + anthranilate. It participates in amino-acid biosynthesis; L-tryptophan biosynthesis; L-tryptophan from chorismate: step 2/5. In terms of biological role, catalyzes the transfer of the phosphoribosyl group of 5-phosphorylribose-1-pyrophosphate (PRPP) to anthranilate to yield N-(5'-phosphoribosyl)-anthranilate (PRA). This chain is Anthranilate phosphoribosyltransferase, found in Shewanella loihica (strain ATCC BAA-1088 / PV-4).